Here is a 198-residue protein sequence, read N- to C-terminus: NAD(P)H dehydrogenase (quinone) (198 aa).

The 186-residue stretch at 4-189 folds into the Flavodoxin-like domain; the sequence is VLVLYYSMYG…SIARYQGEYV (186 aa). Residues 10-15 and 78-80 contribute to the FMN site; these read SMYGHI and TRF. Residue Y12 participates in NAD(+) binding. Substrate is bound at residue W98. Residues 113-118 and H133 each bind FMN; that span reads STGTGG.

Belongs to the WrbA family. The cofactor is FMN.

The catalysed reaction is a quinone + NADH + H(+) = a quinol + NAD(+). It carries out the reaction a quinone + NADPH + H(+) = a quinol + NADP(+). This chain is NAD(P)H dehydrogenase (quinone), found in Escherichia coli (strain SE11).